A 96-amino-acid polypeptide reads, in one-letter code: Co-chaperonin GroES (96 aa).

It belongs to the GroES chaperonin family. As to quaternary structure, heptamer of 7 subunits arranged in a ring. Interacts with the chaperonin GroEL.

It is found in the cytoplasm. Functionally, together with the chaperonin GroEL, plays an essential role in assisting protein folding. The GroEL-GroES system forms a nano-cage that allows encapsulation of the non-native substrate proteins and provides a physical environment optimized to promote and accelerate protein folding. GroES binds to the apical surface of the GroEL ring, thereby capping the opening of the GroEL channel. This Geobacter sp. (strain M21) protein is Co-chaperonin GroES.